The following is a 234-amino-acid chain: dTDP-4-amino-4,6-dideoxyglucose formyltransferase (234 aa).

DTDP-4-amino-4,6-dideoxy-alpha-D-glucose-binding positions include Asn-9 and 62-64 (HCK). 65-67 (QRF) contributes to the (6R)-10-formyltetrahydrofolate binding site. The active-site Proton acceptor is His-81. A dTDP-4-amino-4,6-dideoxy-alpha-D-glucose-binding site is contributed by 90-94 (GWFPQ). Residues Asp-112, Asp-116, and Lys-175 each contribute to the (6R)-10-formyltetrahydrofolate site. Position 209 (Asn-209) interacts with dTDP-4-amino-4,6-dideoxy-alpha-D-glucose.

It belongs to the dTDP-Qui4N formyltransferase family. As to quaternary structure, homodimer.

The enzyme catalyses dTDP-4-amino-4,6-dideoxy-alpha-D-glucose + (6R)-10-formyltetrahydrofolate = dTDP-4-formamido-4,6-dideoxy-alpha-D-glucose + (6S)-5,6,7,8-tetrahydrofolate + H(+). Its function is as follows. Sugar N-formyltransferase that catalyzes the conversion of dTDP-4-amino-4,6-dideoxyglucose into dTDP-4-formamido-4,6-dideoxyglucose using N(10)-formyltetrahydrofolate as the carbon source. Plays a role in virulence. The polypeptide is dTDP-4-amino-4,6-dideoxyglucose formyltransferase (Mycobacterium bovis (strain ATCC BAA-935 / AF2122/97)).